We begin with the raw amino-acid sequence, 817 residues long: Probable beta-glucosidase G (817 aa).

Positions 1 to 20 (MANIAHLIVSGLLAATVAHG) are cleaved as a signal peptide. N40, N58, N229, and N276 each carry an N-linked (GlcNAc...) asparagine glycan. Residue D304 is part of the active site. N-linked (GlcNAc...) asparagine glycans are attached at residues N343, N350, N402, N507, N563, N584, N623, N662, N679, and N715.

Belongs to the glycosyl hydrolase 3 family.

Its subcellular location is the secreted. It carries out the reaction Hydrolysis of terminal, non-reducing beta-D-glucosyl residues with release of beta-D-glucose.. It participates in glycan metabolism; cellulose degradation. Functionally, beta-glucosidases are one of a number of cellulolytic enzymes involved in the degradation of cellulosic biomass. Catalyzes the last step releasing glucose from the inhibitory cellobiose. This Aspergillus terreus (strain NIH 2624 / FGSC A1156) protein is Probable beta-glucosidase G (bglG).